The chain runs to 544 residues: Chaperonin GroEL (544 aa).

ATP-binding positions include 30–33, K51, 87–91, G415, 479–481, and D495; these read TLGP, DGTTT, and NAA. Residues 525–537 show a composition bias toward low complexity; it reads PQDTPATAAAPDM. A disordered region spans residues 525–544; that stretch reads PQDTPATAAAPDMGGMGGMM.

The protein belongs to the chaperonin (HSP60) family. In terms of assembly, forms a cylinder of 14 subunits composed of two heptameric rings stacked back-to-back. Interacts with the co-chaperonin GroES.

Its subcellular location is the cytoplasm. It catalyses the reaction ATP + H2O + a folded polypeptide = ADP + phosphate + an unfolded polypeptide.. Together with its co-chaperonin GroES, plays an essential role in assisting protein folding. The GroEL-GroES system forms a nano-cage that allows encapsulation of the non-native substrate proteins and provides a physical environment optimized to promote and accelerate protein folding. This chain is Chaperonin GroEL, found in Ruthia magnifica subsp. Calyptogena magnifica.